The sequence spans 319 residues: tRNA N6-adenosine threonylcarbamoyltransferase (319 aa).

The Fe cation site is built by histidine 110 and histidine 114. Substrate contacts are provided by residues 132-136, aspartate 165, glycine 178, aspartate 182, and asparagine 271; that span reads VVSGG. Fe cation is bound at residue aspartate 300.

The protein belongs to the KAE1 / TsaD family. It depends on Fe(2+) as a cofactor.

The protein localises to the cytoplasm. It carries out the reaction L-threonylcarbamoyladenylate + adenosine(37) in tRNA = N(6)-L-threonylcarbamoyladenosine(37) in tRNA + AMP + H(+). Its function is as follows. Required for the formation of a threonylcarbamoyl group on adenosine at position 37 (t(6)A37) in tRNAs that read codons beginning with adenine. Is involved in the transfer of the threonylcarbamoyl moiety of threonylcarbamoyl-AMP (TC-AMP) to the N6 group of A37, together with TsaE and TsaB. TsaD likely plays a direct catalytic role in this reaction. The protein is tRNA N6-adenosine threonylcarbamoyltransferase of Mycoplasma capricolum subsp. capricolum (strain California kid / ATCC 27343 / NCTC 10154).